A 107-amino-acid chain; its full sequence is UPF0145 protein CKO_02237 (107 aa).

It belongs to the UPF0145 family.

This Citrobacter koseri (strain ATCC BAA-895 / CDC 4225-83 / SGSC4696) protein is UPF0145 protein CKO_02237.